A 79-amino-acid chain; its full sequence is MPHVICEPCIGVKDQSCVEVCPVECIYDGGDQFYIHPEECIDCGACVPACPVNAIYPEEDVPEQWKSYIEKNRKLAGLE.

2 consecutive 4Fe-4S ferredoxin-type domains span residues 2 to 30 (PHVICEPCIGVKDQSCVEVCPVECIYDGG) and 31 to 60 (DQFYIHPEECIDCGACVPACPVNAIYPEED). [3Fe-4S] cluster is bound by residues C9 and C17. [4Fe-4S] cluster-binding residues include C21, C40, C43, and C46. A [3Fe-4S] cluster-binding site is contributed by C50.

[4Fe-4S] cluster is required as a cofactor. It depends on [3Fe-4S] cluster as a cofactor.

In terms of biological role, ferredoxins are iron-sulfur proteins that transfer electrons in a wide variety of metabolic reactions. The polypeptide is Ferredoxin (Thermus thermophilus (strain ATCC 27634 / DSM 579 / HB8)).